A 92-amino-acid polypeptide reads, in one-letter code: Small ribosomal subunit protein uS19c (92 aa).

This sequence belongs to the universal ribosomal protein uS19 family.

It is found in the plastid. The protein resides in the chloroplast. In terms of biological role, protein S19 forms a complex with S13 that binds strongly to the 16S ribosomal RNA. The sequence is that of Small ribosomal subunit protein uS19c from Illicium oligandrum (Star anise).